The sequence spans 99 residues: NADH-ubiquinone oxidoreductase chain 2 (99 aa).

2 consecutive transmembrane segments (helical) span residues 22–42 and 65–85; these read FLTF…IQII and VMIS…SIFI.

This sequence belongs to the complex I subunit 2 family.

Its subcellular location is the mitochondrion inner membrane. It carries out the reaction a ubiquinone + NADH + 5 H(+)(in) = a ubiquinol + NAD(+) + 4 H(+)(out). Functionally, core subunit of the mitochondrial membrane respiratory chain NADH dehydrogenase (Complex I) that is believed to belong to the minimal assembly required for catalysis. Complex I functions in the transfer of electrons from NADH to the respiratory chain. The immediate electron acceptor for the enzyme is believed to be ubiquinone. This is NADH-ubiquinone oxidoreductase chain 2 (ND2) from Cyanidium caldarium (Red alga).